The following is a 102-amino-acid chain: Nucleoid-associated protein BCc_301 (102 aa).

This sequence belongs to the YbaB/EbfC family. Homodimer.

It is found in the cytoplasm. Its subcellular location is the nucleoid. In terms of biological role, binds to DNA and alters its conformation. May be involved in regulation of gene expression, nucleoid organization and DNA protection. The chain is Nucleoid-associated protein BCc_301 from Buchnera aphidicola subsp. Cinara cedri (strain Cc).